The chain runs to 304 residues: UDP-3-O-acyl-N-acetylglucosamine deacetylase (304 aa).

Residues H78, H237, and D241 each contribute to the Zn(2+) site. H264 acts as the Proton donor in catalysis.

This sequence belongs to the LpxC family. Zn(2+) serves as cofactor.

The catalysed reaction is a UDP-3-O-[(3R)-3-hydroxyacyl]-N-acetyl-alpha-D-glucosamine + H2O = a UDP-3-O-[(3R)-3-hydroxyacyl]-alpha-D-glucosamine + acetate. It functions in the pathway glycolipid biosynthesis; lipid IV(A) biosynthesis; lipid IV(A) from (3R)-3-hydroxytetradecanoyl-[acyl-carrier-protein] and UDP-N-acetyl-alpha-D-glucosamine: step 2/6. Functionally, catalyzes the hydrolysis of UDP-3-O-myristoyl-N-acetylglucosamine to form UDP-3-O-myristoylglucosamine and acetate, the committed step in lipid A biosynthesis. This chain is UDP-3-O-acyl-N-acetylglucosamine deacetylase, found in Polynucleobacter asymbioticus (strain DSM 18221 / CIP 109841 / QLW-P1DMWA-1) (Polynucleobacter necessarius subsp. asymbioticus).